Consider the following 564-residue polypeptide: Ribulokinase (564 aa).

This sequence belongs to the ribulokinase family.

The enzyme catalyses D-ribulose + ATP = D-ribulose 5-phosphate + ADP + H(+). It carries out the reaction L-ribulose + ATP = L-ribulose 5-phosphate + ADP + H(+). Its pathway is carbohydrate degradation; L-arabinose degradation via L-ribulose; D-xylulose 5-phosphate from L-arabinose (bacterial route): step 2/3. The polypeptide is Ribulokinase (Geobacillus thermodenitrificans (strain NG80-2)).